The following is a 151-amino-acid chain: uncharacterized protein (151 aa).

The tract at residues Gly122–Phe151 is disordered.

This is an uncharacterized protein from Homo sapiens (Human).